We begin with the raw amino-acid sequence, 552 residues long: Arginine--tRNA ligase (552 aa).

Positions 130–140 (ANPTGPLSIGH) match the 'HIGH' region motif.

The protein belongs to the class-I aminoacyl-tRNA synthetase family. As to quaternary structure, monomer.

It localises to the cytoplasm. The enzyme catalyses tRNA(Arg) + L-arginine + ATP = L-arginyl-tRNA(Arg) + AMP + diphosphate. The chain is Arginine--tRNA ligase from Desulfotalea psychrophila (strain LSv54 / DSM 12343).